The primary structure comprises 166 residues: Cyanate hydratase (166 aa).

Residues Arg-92, Glu-95, and Ser-118 contribute to the active site.

The protein belongs to the cyanase family.

The catalysed reaction is cyanate + hydrogencarbonate + 3 H(+) = NH4(+) + 2 CO2. In terms of biological role, catalyzes the reaction of cyanate with bicarbonate to produce ammonia and carbon dioxide. This is Cyanate hydratase from Zea mays (Maize).